The following is a 2183-amino-acid chain: DNA polymerase epsilon catalytic subunit A (2183 aa).

Residues cysteine 2066, cysteine 2069, cysteine 2090, and cysteine 2093 each contribute to the Zn(2+) site. The CysA-type zinc finger occupies 2066–2093 (CFKCKNPCDLDLCKDSCCTKSGFRCPLC). Residues cysteine 2124, cysteine 2127, cysteine 2139, and cysteine 2141 each contribute to the [4Fe-4S] cluster site. The short motif at 2124-2141 (CDKCRRVKEYELTEFCPC) is the CysB motif element.

This sequence belongs to the DNA polymerase type-B family. Heterotetramer. Consists of 4 subunits: POL2, DPB2, DPB3 and DPB4. The cofactor is [4Fe-4S] cluster.

The protein resides in the nucleus. The catalysed reaction is DNA(n) + a 2'-deoxyribonucleoside 5'-triphosphate = DNA(n+1) + diphosphate. DNA polymerase II participates in chromosomal DNA replication. This Yarrowia lipolytica (strain CLIB 122 / E 150) (Yeast) protein is DNA polymerase epsilon catalytic subunit A (POL2).